The primary structure comprises 425 residues: Inositol hexakisphosphate kinase 2 (425 aa).

ATP contacts are provided by residues 206–208 (ENL) and D219. Residues 215–223 (PCVLDLKMG), K221, and 235–242 (KAANQIRK) each bind substrate. An ATP-binding site is contributed by D382. Position 385 (H385) interacts with substrate.

Belongs to the inositol phosphokinase (IPK) family. In terms of tissue distribution, highly expressed in small intestine.

It localises to the nucleus. The catalysed reaction is 1D-myo-inositol hexakisphosphate + ATP = 5-diphospho-1D-myo-inositol 1,2,3,4,6-pentakisphosphate + ADP. It functions in the pathway phospholipid metabolism; phosphatidylinositol metabolism. In terms of biological role, converts inositol hexakisphosphate (InsP6) to diphosphoinositol pentakisphosphate (InsP7/PP-InsP5). The polypeptide is Inositol hexakisphosphate kinase 2 (Ip6k2) (Rattus norvegicus (Rat)).